Consider the following 653-residue polypeptide: Chaperone protein dnaK3 (653 aa).

At threonine 197 the chain carries Phosphothreonine; by autocatalysis.

It belongs to the heat shock protein 70 family.

Functionally, acts as a chaperone. The protein is Chaperone protein dnaK3 (dnaK3) of Nostoc sp. (strain PCC 7120 / SAG 25.82 / UTEX 2576).